A 615-amino-acid chain; its full sequence is Neurosecretory protein VGF (615 aa).

A signal peptide spans 1-22; it reads MKALRLSASALFCLLLINGLGA. Disordered stretches follow at residues 22-201 and 218-257; these read AAPP…ESPG and PERAPLPPPAPSQFQARMPDSGPLPETHKFGEGVSSPKTH. 2 stretches are compositionally biased toward pro residues: residues 25 to 35 and 129 to 141; these read PGRPEAQPPPL and PESPEPAAPPRPQ. Residues 179–194 show a composition bias toward low complexity; sequence ETAAAETETRTHTLTR. The residue at position 310 (Gln-310) is a Pyrrolidone carboxylic acid. Residues 342–600 form a disordered region; the sequence is RQRGLGGRGL…EAEERRLQEQ (259 aa). A compositionally biased stretch (acidic residues) spans 378–394; that stretch reads VGEEDEEAAEAEAEAEE. Positions 415–433 are enriched in basic and acidic residues; the sequence is AEDKRSQEETPGHRRKEAE. At Ser-420 the chain carries Phosphoserine; by FAM20C. Thr-424 carries the phosphothreonine; by FAM20C modification. A compositionally biased stretch (acidic residues) spans 434–448; sequence GTEEGGEEEDDEEMD. Pro residues predominate over residues 487 to 497; that stretch reads PPEPVPPPRAA. Pro-577 is modified (proline amide). The segment covering 577–599 has biased composition (basic and acidic residues); it reads PGREAQARRAQEEAEAEERRLQE.

As to quaternary structure, interacts with HSPA8 on cell membrane. Interacts with C3AR1. Interacts with C1QBP. Multiple peptides are derived from VGF, with activities in synaptic plasticity, antidepression, penile erection, autonomic activation, and increases in energy expenditure. As to expression, central and peripheral nervous systems, synthesized exclusively in neuronal and neuroendocrine cells.

It is found in the secreted. The protein localises to the cytoplasmic vesicle. It localises to the secretory vesicle. In terms of biological role, secreted polyprotein that is packaged and proteolytically processed by prohormone convertases PCSK1 and PCSK2 in a cell-type-specific manner. VGF and peptides derived from its processing play many roles in neurogenesis and neuroplasticity associated with learning, memory, depression and chronic pain. Functionally, plays a role in the control of body fluid homeostasis by regulating vasopressin release. Suppresses presynaptic glutamatergic neurons connected to vasopressin neurons. Its function is as follows. Plays a role in the control of body fluid homeostasis by regulating vasopressin release. Activates GABAergic interneurons which are inhibitory neurons of the nervous system and thereby suppresses presynaptic glutamatergic neurons. Also stimulates feeding behavior in an orexin-dependent manner in the hypothalamus. Functions as a positive regulator for the activation of orexin neurons resulting in elevated gastric acid secretion and gastric emptying. Secreted multifunctional neuropeptide that binds to different cell receptors and thereby plays multiple physiological roles including modulation of energy expenditure, pain, response to stress, gastric regulation, glucose homeostasis as well as lipolysis. Activates the G-protein-coupled receptor C3AR1 via a folding-upon-binding mechanism leading to enhanced lipolysis in adipocytes. Interacts with C1QBP receptor in macrophages and microglia causing increased levels of intracellular calcium and hypersensitivity. In terms of biological role, plays a role in the regulation of memory formation and depression-related behaviors potentially by influencing synaptic plasticity and neurogenesis. Induces acute and transient activation of the NTRK2/TRKB receptor and subsequent CREB phosphorylation. Also induces insulin secretion in insulinoma cells by increasing intracellular calcium mobilization. Functionally, has bactericidal activity against M.luteus, and antifungal activity against P. Pastoris. This chain is Neurosecretory protein VGF (VGF), found in Homo sapiens (Human).